We begin with the raw amino-acid sequence, 331 residues long: LIM/homeobox protein Lhx9 (331 aa).

LIM zinc-binding domains are found at residues 71 to 132 (TLCA…FSVK) and 133 to 194 (RCAR…LVQG). The tract at residues 253 to 275 (ETDLDRDQTYPPSQKTKRMRTSF) is disordered. A DNA-binding region (homeobox) is located at residues 268–327 (TKRMRTSFKHHQLRTMKSYFAINHNPDAKDLKQLAQKTGLTKRVLQGEQCSGFNSHTTRR).

Its subcellular location is the nucleus. In terms of biological role, may be involved in gonadal development. In Xenopus laevis (African clawed frog), this protein is LIM/homeobox protein Lhx9 (lhx9).